Consider the following 1615-residue polypeptide: Mediator of RNA polymerase II transcription subunit 23 (1615 aa).

2 disordered regions span residues 40 to 67 (RQKPDESLRDPPNKSQKRVHAPNRDLPP) and 1230 to 1270 (SSSS…NASE). The segment covering 41–51 (QKPDESLRDPP) has biased composition (basic and acidic residues). The span at 1230-1241 (SSSSNCSSRSGS) shows a compositional bias: low complexity.

It belongs to the Mediator complex subunit 23 family. Component of the Mediator complex.

The protein localises to the nucleus. Its function is as follows. Component of the Mediator complex, a coactivator involved in the regulated transcription of nearly all RNA polymerase II-dependent genes. Mediator functions as a bridge to convey information from gene-specific regulatory proteins to the basal RNA polymerase II transcription machinery. The Mediator complex, having a compact conformation in its free form, is recruited to promoters by direct interactions with regulatory proteins and serves for the assembly of a functional preinitiation complex with RNA polymerase II and the general transcription factors. The chain is Mediator of RNA polymerase II transcription subunit 23 (MED23) from Arabidopsis thaliana (Mouse-ear cress).